Consider the following 188-residue polypeptide: dCTP deaminase (188 aa).

109-114 (KSTYAR) lines the dCTP pocket. E135 (proton donor/acceptor) is an active-site residue. DCTP-binding residues include Q154, Y168, and Q178.

It belongs to the dCTP deaminase family. In terms of assembly, homotrimer.

The enzyme catalyses dCTP + H2O + H(+) = dUTP + NH4(+). It participates in pyrimidine metabolism; dUMP biosynthesis; dUMP from dCTP (dUTP route): step 1/2. Its function is as follows. Catalyzes the deamination of dCTP to dUTP. This Helicobacter pylori (strain Shi470) protein is dCTP deaminase.